The chain runs to 276 residues: MDLWVAIQALILGVVEGITEFLPVSSTGHQIIVADLIGFGGERALAFNIIIQLGAILAVIWEYRRKIIDVVVGLPEERQAQKFTVNLLIAFMPAVVLGVAFADLIHEYLFNPITVAAALVIGGIVMLWAERRDHAIRAETVDDMTWTLALKVGFAQCLALVPGTSRSGSTIIGGLLFGLSRKAATEFSFFLAMPTMVGAAVYSGYKYRDLFQPGDFAVFAIGFVTSFIFAMLAVRALLKFIGNHSYAAFAWYRIGFGLLILATWQLGMIDWSTAIG.

Transmembrane regions (helical) follow at residues 44–63 (ALAFNIIIQLGAILAVIWEY), 85–105 (VNLLIAFMPAVVLGVAFADLI), 109–129 (LFNPITVAAALVIGGIVMLWA), 183–203 (AATEFSFFLAMPTMVGAAVYS), 214–234 (GDFAVFAIGFVTSFIFAMLAV), and 249–269 (FAWYRIGFGLLILATWQLGMI).

The protein belongs to the UppP family.

Its subcellular location is the cell inner membrane. It catalyses the reaction di-trans,octa-cis-undecaprenyl diphosphate + H2O = di-trans,octa-cis-undecaprenyl phosphate + phosphate + H(+). Functionally, catalyzes the dephosphorylation of undecaprenyl diphosphate (UPP). Confers resistance to bacitracin. The protein is Undecaprenyl-diphosphatase 1 of Stutzerimonas stutzeri (strain A1501) (Pseudomonas stutzeri).